Consider the following 262-residue polypeptide: Thiazole synthase (262 aa).

Residue K98 is the Schiff-base intermediate with DXP of the active site. Residues G159, 186–187 (AG), and 208–209 (NT) contribute to the 1-deoxy-D-xylulose 5-phosphate site.

Belongs to the ThiG family. As to quaternary structure, homotetramer. Forms heterodimers with either ThiH or ThiS.

It is found in the cytoplasm. The catalysed reaction is [ThiS sulfur-carrier protein]-C-terminal-Gly-aminoethanethioate + 2-iminoacetate + 1-deoxy-D-xylulose 5-phosphate = [ThiS sulfur-carrier protein]-C-terminal Gly-Gly + 2-[(2R,5Z)-2-carboxy-4-methylthiazol-5(2H)-ylidene]ethyl phosphate + 2 H2O + H(+). It participates in cofactor biosynthesis; thiamine diphosphate biosynthesis. Its function is as follows. Catalyzes the rearrangement of 1-deoxy-D-xylulose 5-phosphate (DXP) to produce the thiazole phosphate moiety of thiamine. Sulfur is provided by the thiocarboxylate moiety of the carrier protein ThiS. In vitro, sulfur can be provided by H(2)S. The chain is Thiazole synthase from Hahella chejuensis (strain KCTC 2396).